Here is a 321-residue protein sequence, read N- to C-terminus: ATP-dependent 6-phosphofructokinase (321 aa).

Residue Gly12 coordinates ATP. 22 to 26 (RGVVR) is an ADP binding site. ATP contacts are provided by residues 73 to 74 (RF) and 103 to 106 (GDGS). Asp104 contributes to the Mg(2+) binding site. 127-129 (TID) is a binding site for substrate. Asp129 serves as the catalytic Proton acceptor. Residue Arg156 coordinates ADP. Residues Arg164 and 171–173 (MGR) contribute to the substrate site. ADP is bound by residues 187–189 (GCE), Lys213, and 215–217 (KRH). Residues Glu224, Arg245, and 251 to 254 (HTQR) contribute to the substrate site.

It belongs to the phosphofructokinase type A (PFKA) family. ATP-dependent PFK group I subfamily. Prokaryotic clade 'B1' sub-subfamily. Homotetramer. The cofactor is Mg(2+).

It is found in the cytoplasm. The catalysed reaction is beta-D-fructose 6-phosphate + ATP = beta-D-fructose 1,6-bisphosphate + ADP + H(+). Its pathway is carbohydrate degradation; glycolysis; D-glyceraldehyde 3-phosphate and glycerone phosphate from D-glucose: step 3/4. Allosterically activated by ADP and other diphosphonucleosides, and allosterically inhibited by phosphoenolpyruvate. Its function is as follows. Catalyzes the phosphorylation of D-fructose 6-phosphate to fructose 1,6-bisphosphate by ATP, the first committing step of glycolysis. The sequence is that of ATP-dependent 6-phosphofructokinase from Glaesserella parasuis serovar 5 (strain SH0165) (Haemophilus parasuis).